The chain runs to 344 residues: Ferredoxin--NADP reductase (344 aa).

Residues Ser12, Asp31, Lys39, Tyr43, Val83, Ile118, Asp285, and Ser326 each coordinate FAD.

This sequence belongs to the ferredoxin--NADP reductase type 2 family. As to quaternary structure, homodimer. Requires FAD as cofactor.

It carries out the reaction 2 reduced [2Fe-2S]-[ferredoxin] + NADP(+) + H(+) = 2 oxidized [2Fe-2S]-[ferredoxin] + NADPH. The chain is Ferredoxin--NADP reductase from Staphylococcus aureus (strain JH1).